Reading from the N-terminus, the 75-residue chain is Kappa-thalatoxin-Tas2a (75 aa).

An N-terminal signal peptide occupies residues 1 to 22 (MKFQMIAAVLLIAFCLSVVVTA). Residues 23–40 (RMELQDDEEMKNGSFQKR) constitute a propeptide that is removed on maturation. Residues 43–75 (CIDTIPKSRCTAFQCKHSMKYRLSFCRKTCGTC) form the ShKT domain. Intrachain disulfides connect cysteine 43-cysteine 75, cysteine 52-cysteine 68, and cysteine 57-cysteine 72.

The protein belongs to the sea anemone type 1 potassium channel toxin family. Type 1a subfamily.

It localises to the secreted. Its subcellular location is the nematocyst. Inhibits voltage-gated potassium channels (Kv) with higher potency for Kv1.1/KCNA1 and Kv1.3/KCNA3 (IC(50)=3.4 nM). This is Kappa-thalatoxin-Tas2a from Thalassianthus aster (Fuzzy-tipped anemone).